Here is a 77-residue protein sequence, read N- to C-terminus: Sec-independent protein translocase protein TatA 2 (77 aa).

A helical membrane pass occupies residues 2–22 (FPGGISMTELIIILAVILLLF). Residues 52–77 (KEVKAEDVKTEERKEEKKEEKEKVEA) are disordered.

The protein belongs to the TatA/E family. Forms a complex with TatC.

Its subcellular location is the cell inner membrane. Functionally, part of the twin-arginine translocation (Tat) system that transports large folded proteins containing a characteristic twin-arginine motif in their signal peptide across membranes. TatA could form the protein-conducting channel of the Tat system. The chain is Sec-independent protein translocase protein TatA 2 from Aquifex aeolicus (strain VF5).